The sequence spans 1209 residues: DNA-directed RNA polymerase subunit beta'' (1209 aa).

4 residues coordinate Zn(2+): Cys-233, Cys-308, Cys-315, and Cys-318.

It belongs to the RNA polymerase beta' chain family. RpoC2 subfamily. In plastids the minimal PEP RNA polymerase catalytic core is composed of four subunits: alpha, beta, beta', and beta''. When a (nuclear-encoded) sigma factor is associated with the core the holoenzyme is formed, which can initiate transcription. It depends on Zn(2+) as a cofactor.

Its subcellular location is the plastid. The protein localises to the chloroplast. It catalyses the reaction RNA(n) + a ribonucleoside 5'-triphosphate = RNA(n+1) + diphosphate. DNA-dependent RNA polymerase catalyzes the transcription of DNA into RNA using the four ribonucleoside triphosphates as substrates. The chain is DNA-directed RNA polymerase subunit beta'' from Pinus koraiensis (Korean pine).